A 47-amino-acid chain; its full sequence is Bifunctional chitinase/lysozyme (47 aa).

One can recognise a GH18 domain in the interval 1 to 47 (GGIAIYWGQNGNEGTLTQTCNTGKYSYVNIAFLNKFGNGQTPEINLA).

Belongs to the glycosyl hydrolase 18 family. Chitinase class II subfamily.

It localises to the secreted. The protein resides in the extracellular space. The enzyme catalyses Random endo-hydrolysis of N-acetyl-beta-D-glucosaminide (1-&gt;4)-beta-linkages in chitin and chitodextrins.. It carries out the reaction Hydrolysis of (1-&gt;4)-beta-linkages between N-acetylmuramic acid and N-acetyl-D-glucosamine residues in a peptidoglycan and between N-acetyl-D-glucosamine residues in chitodextrins.. In terms of biological role, bifunctional enzyme with lysozyme/chitinase activity. This chain is Bifunctional chitinase/lysozyme, found in Parthenocissus quinquefolia (Virginia creeper).